Reading from the N-terminus, the 146-residue chain is Large-conductance mechanosensitive channel (146 aa).

The next 2 membrane-spanning stretches (helical) occupy residues 15-35 (VSLA…TSLV) and 81-101 (GIFI…FIII).

This sequence belongs to the MscL family. In terms of assembly, homopentamer.

It localises to the cell membrane. Functionally, channel that opens in response to stretch forces in the membrane lipid bilayer. May participate in the regulation of osmotic pressure changes within the cell. The protein is Large-conductance mechanosensitive channel of Clostridium beijerinckii (strain ATCC 51743 / NCIMB 8052) (Clostridium acetobutylicum).